The following is a 314-amino-acid chain: Glycine--tRNA ligase alpha subunit (314 aa).

It belongs to the class-II aminoacyl-tRNA synthetase family. Tetramer of two alpha and two beta subunits.

It is found in the cytoplasm. The catalysed reaction is tRNA(Gly) + glycine + ATP = glycyl-tRNA(Gly) + AMP + diphosphate. In Leuconostoc citreum (strain KM20), this protein is Glycine--tRNA ligase alpha subunit.